The primary structure comprises 942 residues: MSVCLTEEQKRKIEENRQRALARRAERLAAQQNSQTNRSLSAPLNAQIPSGQQGVLPSAQSINATGTSRAANSKYAFQKSPSGGNTAPSVPGAAGNKVQAVGNRSHDSKSLTDPAKDVKGNYTVPEAQSVPSGPSNAPNPRHLYPAGTTPGQESAKHSNSYSRPEPLTACDNDTTGPGPLRSTTTITKFYGAGPGSKPAVPVSNKTVSEGRERGVTGSAAEAVPAKKASGATRGRCVKHAESRFRVEVGYSAELIALFKTIPSKNYDPATKMWNFGLEDYASLMSEVQQLQSVELKALEGMEGVQIAPPPATGGGTNINALLAMCNNWQRPSATLRGRCILVSRSRFEMEIGYHAEIIGLFKQMNTRNYDTKTRKWSFMLEDYQKLMESVRNIQQVEVEPLPRPVLQAFAPQFGKTTIIREEIPEVDLSQVDSKLGSNLMPFQRDGVNFAVSREGRLLLADDMGLGKTIQAICIAAYYRKEWPLLVVAPSSVRFTWAEAFQRWLPSIRPESVNVIVTGRDSQSASLINIVSFDLLGKMDKQIAATFQVIIIDESHFLKNVKTARCKAAMPLLKSAKRVMLLSGTPAMSRPAELYTQIAAVRPSFFPRFHDFGIRYCDAKQMPWGWDYSGSSNLNELKLLLEESIMIRRLKSEVLSQLPAKQRKMVVVAPEGITAKTKAALAAAAKEMAKGFKSKVQEKEALLLFYNRTAEAKIRSVLEYIMDLLESGREKFLVFAHHKLVLDHICEELGKKDVPYIRIDGNTSSADRQSLCHKFQMSEKSCVAVLSITAANMGLTLSSADLVVFAELFWNPGVLIQAEDRVHRIGQTSSVNIHYLVAKGTADDYLWPMIQEKIKVLGQAGLSEANFSETTESTDYFYKDPKQKTIYDLFQRSFSEEGAETNADEALLLEACEEADLGDAVCSPTDYSGNSCKRRKIDEYFAL.

The stretch at 5–29 forms a coiled coil; it reads LTEEQKRKIEENRQRALARRAERLA. The segment at 24–214 is disordered; that stretch reads RAERLAAQQN…KTVSEGRERG (191 aa). 2 stretches are compositionally biased toward polar residues: residues 34–71 and 79–88; these read SQTN…SRAA and KSPSGGNTAP. Residues 104 to 119 are compositionally biased toward basic and acidic residues; it reads RSHDSKSLTDPAKDVK. 3 stretches are compositionally biased toward polar residues: residues 129–138, 149–162, and 171–187; these read SVPSGPSNAP, TPGQ…NSYS, and DNDT…TTIT. HARP domains follow at residues 228–299 and 331–402; these read ASGA…KALE and PSAT…EPLP. The Helicase ATP-binding domain maps to 448–603; that stretch reads NFAVSREGRL…YTQIAAVRPS (156 aa). 461–468 contacts ATP; it reads DDMGLGKT. Positions 552–555 match the DESH box motif; sequence DESH. The Nuclear localization signal signature appears at 647–664; sequence RRLKSEVLSQLPAKQRKM. One can recognise a Helicase C-terminal domain in the interval 719–872; that stretch reads YIMDLLESGR…EANFSETTES (154 aa).

Belongs to the SNF2/RAD54 helicase family. SMARCAL1 subfamily.

It localises to the nucleus. It carries out the reaction ATP + H2O = ADP + phosphate + H(+). ATP-dependent annealing helicase that catalyzes the rewinding of the stably unwound DNA. Rewinds single-stranded DNA bubbles that are stably bound by replication protein A (RPA). Acts throughout the genome to reanneal stably unwound DNA, performing the opposite reaction of many enzymes, such as helicases and polymerases, that unwind DNA. This Xenopus tropicalis (Western clawed frog) protein is SWI/SNF-related matrix-associated actin-dependent regulator of chromatin subfamily A-like protein 1 (smarcal1).